We begin with the raw amino-acid sequence, 393 residues long: CCA-adding enzyme (393 aa).

The ATP site is built by Gly27 and Arg30. Positions 27 and 30 each coordinate CTP. 2 residues coordinate Mg(2+): Asp40 and Asp42. The ATP site is built by Arg111, Asp154, Arg157, Arg160, and Arg163. Positions 111, 154, 157, 160, and 163 each coordinate CTP.

Belongs to the tRNA nucleotidyltransferase/poly(A) polymerase family. Bacterial CCA-adding enzyme type 3 subfamily. In terms of assembly, homodimer. Requires Mg(2+) as cofactor.

The enzyme catalyses a tRNA precursor + 2 CTP + ATP = a tRNA with a 3' CCA end + 3 diphosphate. It carries out the reaction a tRNA with a 3' CCA end + 2 CTP + ATP = a tRNA with a 3' CCACCA end + 3 diphosphate. In terms of biological role, catalyzes the addition and repair of the essential 3'-terminal CCA sequence in tRNAs without using a nucleic acid template. Adds these three nucleotides in the order of C, C, and A to the tRNA nucleotide-73, using CTP and ATP as substrates and producing inorganic pyrophosphate. tRNA 3'-terminal CCA addition is required both for tRNA processing and repair. Also involved in tRNA surveillance by mediating tandem CCA addition to generate a CCACCA at the 3' terminus of unstable tRNAs. While stable tRNAs receive only 3'-terminal CCA, unstable tRNAs are marked with CCACCA and rapidly degraded. The protein is CCA-adding enzyme of Listeria innocua serovar 6a (strain ATCC BAA-680 / CLIP 11262).